The sequence spans 141 residues: Large ribosomal subunit protein uL11B (141 aa).

It belongs to the universal ribosomal protein uL11 family. In terms of assembly, part of the ribosomal stalk of the 50S ribosomal subunit. Interacts with L10 and the large rRNA to form the base of the stalk. L10 forms an elongated spine to which L12 dimers bind in a sequential fashion forming a multimeric L10(L12)X complex. Post-translationally, one or more lysine residues are methylated.

Functionally, forms part of the ribosomal stalk which helps the ribosome interact with GTP-bound translation factors. The protein is Large ribosomal subunit protein uL11B of Halalkalibacterium halodurans (strain ATCC BAA-125 / DSM 18197 / FERM 7344 / JCM 9153 / C-125) (Bacillus halodurans).